A 126-amino-acid chain; its full sequence is MADLAKIVEDLSSLTVLEAAELAKLLEEKWGVSAAAAVAVAAGPAAGGAAAAPVEEQTEFTVVLAAVGDKKIEVIKEVRGVTGLGLKEAKDLVEAAPKPVKEGVSKEEAEKIKAALEKAGAKVELK.

Belongs to the bacterial ribosomal protein bL12 family. As to quaternary structure, homodimer. Part of the ribosomal stalk of the 50S ribosomal subunit. Forms a multimeric L10(L12)X complex, where L10 forms an elongated spine to which 2 to 4 L12 dimers bind in a sequential fashion. Binds GTP-bound translation factors.

Forms part of the ribosomal stalk which helps the ribosome interact with GTP-bound translation factors. Is thus essential for accurate translation. The protein is Large ribosomal subunit protein bL12 of Beijerinckia indica subsp. indica (strain ATCC 9039 / DSM 1715 / NCIMB 8712).